A 405-amino-acid polypeptide reads, in one-letter code: CLIP domain-containing serine protease B8 (405 aa).

An N-terminal signal peptide occupies residues M1–G24. Cystine bridges form between C41-C94, C52-C84, and C58-C95. In terms of domain architecture, Clip spans C41–C95. N-linked (GlcNAc...) asparagine glycosylation is found at N85 and N108. The region spanning I137–G404 is the Peptidase S1 domain. The cysteines at positions 167 and 183 are disulfide-linked. Active-site charge relay system residues include H182 and D249. 2 disulfides stabilise this stretch: C322–C339 and C349–C380. Residue S353 is the Charge relay system of the active site.

This sequence belongs to the peptidase S1 family. CLIP subfamily. In terms of processing, proteolytic cleavage is necessary for activation. Cleaved and activated by CLIPB4.

It is found in the secreted. Functionally, serine protease that functions in the melanization-mediated immune response. Preferentially, cleaves substrates with an arginine at the P1 site. May be involved in the activation of the prophenoloxidase cascade upstream of CLIPB9; does not cleave prophenoloxidase. In Anopheles gambiae (African malaria mosquito), this protein is CLIP domain-containing serine protease B8.